The following is a 733-amino-acid chain: ATP-dependent RNA helicase DBP7 (733 aa).

Disordered stretches follow at residues 1–92 (MDED…SKMI) and 119–139 (SSQLKVTKESDEKTYLPSNAP). Residues 17–30 (SVSSGSNKRTTSKV) show a composition bias toward polar residues. The segment covering 52 to 80 (QKKDRSATGKDDGKKHENDESNDSKKRPT) has biased composition (basic and acidic residues). Positions 144–173 (STFEGLGINERLSKHLTETLRFKNPTKVQK) match the Q motif motif. The Helicase ATP-binding domain occupies 177-372 (PTMLSTERDL…SIILNNPEMI (196 aa)). Residue 190–197 (AQTGSGKT) coordinates ATP. The DEAD box motif lies at 304-307 (DEGD). Residues 406-596 (TLSAILKKIS…NYENYLKDGF (191 aa)) enclose the Helicase C-terminal domain. Residues 687–714 (KKLGKSVESNSGIQGASKKTKKEDPRKK) form a disordered region.

The protein belongs to the DEAD box helicase family. DDX31/DBP7 subfamily.

The protein localises to the nucleus. It is found in the nucleolus. It carries out the reaction ATP + H2O = ADP + phosphate + H(+). ATP-binding RNA helicase involved in the biogenesis of 60S ribosomal subunits and is required for the normal formation of 25S and 5.8S rRNAs. The chain is ATP-dependent RNA helicase DBP7 (DPB7) from Scheffersomyces stipitis (strain ATCC 58785 / CBS 6054 / NBRC 10063 / NRRL Y-11545) (Yeast).